The sequence spans 105 residues: Toxin ParE2 (105 aa).

This sequence belongs to the RelE toxin family.

In terms of biological role, toxic component of a type II toxin-antitoxin (TA) system. Its toxic effect is neutralized by coexpression with cognate antitoxin ParD2. The polypeptide is Toxin ParE2 (parE2) (Mycobacterium tuberculosis (strain CDC 1551 / Oshkosh)).